A 382-amino-acid chain; its full sequence is UDP-4-amino-4-deoxy-L-arabinose--oxoglutarate aminotransferase (382 aa).

Residue lysine 183 is modified to N6-(pyridoxal phosphate)lysine.

The protein belongs to the DegT/DnrJ/EryC1 family. ArnB subfamily. In terms of assembly, homodimer. Pyridoxal 5'-phosphate is required as a cofactor.

The enzyme catalyses UDP-4-amino-4-deoxy-beta-L-arabinose + 2-oxoglutarate = UDP-beta-L-threo-pentopyranos-4-ulose + L-glutamate. Its pathway is nucleotide-sugar biosynthesis; UDP-4-deoxy-4-formamido-beta-L-arabinose biosynthesis; UDP-4-deoxy-4-formamido-beta-L-arabinose from UDP-alpha-D-glucuronate: step 2/3. It functions in the pathway bacterial outer membrane biogenesis; lipopolysaccharide biosynthesis. Catalyzes the conversion of UDP-4-keto-arabinose (UDP-Ara4O) to UDP-4-amino-4-deoxy-L-arabinose (UDP-L-Ara4N). The modified arabinose is attached to lipid A and is required for resistance to polymyxin and cationic antimicrobial peptides. The chain is UDP-4-amino-4-deoxy-L-arabinose--oxoglutarate aminotransferase from Pseudomonas aeruginosa (strain UCBPP-PA14).